Consider the following 461-residue polypeptide: E3 ubiquitin-protein ligase parkin (461 aa).

The Ubiquitin-like domain maps to V30–F90. Phosphoserine is present on S92. The RING-type 0; atypical zinc-finger motif lies at A145 to P227. Residues C151, C155, C167, and C170 each contribute to the Zn(2+) site. The residue at position 176 (T176) is a Phosphothreonine. Zn(2+) contacts are provided by C197, C202, C213, H216, C240, C243, C255, H259, C262, C265, C291, C295, C334, C339, C354, C356, C361, C364, H369, C373, C415, and C418. The tract at residues K236–G461 is TRIAD supradomain. The segment at C240–C295 adopts an RING-type 1 zinc-finger fold. 2 IBR-type zinc fingers span residues E315–C373 and L411–R452. The RING-type 2; atypical zinc-finger motif lies at C415 to C446. C428 is an active-site residue. Positions 433, 438, 443, 446, 454, and 458 each coordinate Zn(2+).

It belongs to the RBR family. Parkin subfamily. Forms an E3 ubiquitin ligase complex with E2 ubiquitin-conjugating enzymes. Auto-ubiquitinates in an E2-dependent manner leading to its own degradation. Post-translationally, phosphorylated. Activation requires phosphorylation at Ser-92 by Pink1 and binding to Pink1-phosphorylated polyubiquitin chains. Phosphorylation at Thr-176 by Pink1 is also important for mitochondrial localization.

The protein resides in the mitochondrion. Its subcellular location is the cytoplasm. It localises to the cytosol. The catalysed reaction is [E2 ubiquitin-conjugating enzyme]-S-ubiquitinyl-L-cysteine + [acceptor protein]-L-lysine = [E2 ubiquitin-conjugating enzyme]-L-cysteine + [acceptor protein]-N(6)-ubiquitinyl-L-lysine.. Its pathway is protein modification; protein ubiquitination. With respect to regulation, in the autoinhibited state the side chain of Phe-460 inserts into a hydrophobic groove in RING-0, occluding the ubiquitin acceptor site Cys-428, whereas the REP repressor element binds RING-1 and blocks its E2-binding site. Activation of park requires 2 steps: (1) phosphorylation at Ser-92 by Pink1 and (2) binding to phosphorylated ubiquitin, leading to unlock repression of the catalytic Cys-428 by the RING-0 region via an allosteric mechanism and converting park to its fully-active form. According to another report, phosphorylation at Ser-92 by Pink1 is not essential for activation and only binding to phosphorylated ubiquitin is essential to unlock repression. In terms of biological role, E3 ubiquitin-protein ligase which accepts ubiquitin from E2 ubiquitin-conjugating enzymes in the form of a thioester and then directly transfers the ubiquitin to targeted substrates, such as Marf, Opa1, Sep1, Tom20 and porin. Mediates monoubiquitination as well as 'Lys-6', 'Lys-11', 'Lys-48'-linked and 'Lys-63'-linked polyubiquitination of substrates, depending on the context. Protects against mitochondrial dysfunction during cellular stress, by acting downstream of Pink1, to coordinate mitochondrial quality control mechanisms that remove and replace dysfunctional mitochondrial components. Depending on the severity of mitochondrial damage and/or dysfunction, activity ranges from preventing apoptosis and stimulating mitochondrial biogenesis to regulating mitochondrial dynamics and eliminating severely damaged mitochondria via mitophagy. Appears to be particularly important in maintaining the physiology and function of cells with high energy demands that are undergoing stress or altered metabolic environment, including spermatids, muscle cells and neurons such as the dopaminergic (DA) neurons. Activation and recruitment onto the outer membrane of damaged/dysfunctional mitochondria (OMM) requires Pink1-mediated phosphorylation of both park and ubiquitin. In depolarized mitochondria, mediates the decision between mitophagy or preventing apoptosis by inducing either the poly- or monoubiquitination of porin/VDAC; polyubiquitination of porin promotes mitophagy, while monoubiquitination of porin decreases mitochondrial calcium influx which ultimately inhibits apoptosis. When cellular stress results in irreversible mitochondrial damage, promotes the autophagic degradation of dysfunctional depolarized mitochondria (mitophagy) by promoting the ubiquitination of mitochondrial proteins. Preferentially assembles 'Lys-6'-, 'Lys-11'- and 'Lys-63'-linked polyubiquitin chains following mitochondrial damage, leading to mitophagy. In developing tissues, inhibits JNK-mediated apoptosis by negatively regulating bsk transcription. The Pink1-park pathway also promotes fission and/or inhibits fusion of damaged mitochondria by mediating the ubiquitination and subsequent degradation of proteins involved in mitochondrial fusion/fission such as Marf and Opa1. This prevents the refusion of unhealthy mitochondria with the healthy mitochondrial network and/or initiates mitochondrial fragmentation facilitating their later engulfment by autophagosomes. Regulates motility of damaged mitochondria by phosphorylating Miro which likely promotes its park-dependent degradation by the proteasome; in motor neurons, this inhibits mitochondrial intracellular anterograde transport along the axons which probably increases the chance of the mitochondria being eliminated in the soma. The Pink1-park pathway is also involved in mitochondrial regeneration processes such as promoting mitochondrial biogenesis, activating localized mitochondrial repair, promoting selective turnover of mitochondrial proteins and initiating the mitochondrial import of endogenous proteins. Involved in mitochondrial biogenesis via the ubiquitination of transcriptional repressor Paris which leads to its subsequent proteasomal degradation and allows activation of the transcription factor srl. Promotes localized mitochondrial repair by activating the translation of specific nuclear-encoded mitochondrial RNAs (nc-mtRNAs) on the mitochondrial surface, including several key electron transport chain component nc-mtRNAs. This is E3 ubiquitin-protein ligase parkin from Pediculus humanus subsp. corporis (Body louse).